The chain runs to 199 residues: Ribonuclease HII (199 aa).

Positions 10-199 (RIEAGCDEAG…LLPEQLTLGF (190 aa)) constitute an RNase H type-2 domain. 3 residues coordinate a divalent metal cation: D16, E17, and D108.

This sequence belongs to the RNase HII family. Mn(2+) serves as cofactor. The cofactor is Mg(2+).

It is found in the cytoplasm. The enzyme catalyses Endonucleolytic cleavage to 5'-phosphomonoester.. In terms of biological role, endonuclease that specifically degrades the RNA of RNA-DNA hybrids. This chain is Ribonuclease HII, found in Parabacteroides distasonis (strain ATCC 8503 / DSM 20701 / CIP 104284 / JCM 5825 / NCTC 11152).